The chain runs to 451 residues: uncharacterized protein (451 aa).

Positions 2–60 (NLKVKQKIPLKIKRMGINGEGIGFYQKTLVFVPGALKGEDIYCQITSIRRNFVEAKLLK) constitute a TRAM domain. [4Fe-4S] cluster contacts are provided by C73, C79, C82, and C162. Residues Q283, Y312, D333, and D381 each contribute to the S-adenosyl-L-methionine site. C408 (nucleophile) is an active-site residue.

Belongs to the class I-like SAM-binding methyltransferase superfamily. RNA M5U methyltransferase family.

This is an uncharacterized protein from Streptococcus pneumoniae serotype 4 (strain ATCC BAA-334 / TIGR4).